The primary structure comprises 874 residues: Alanine--tRNA ligase (874 aa).

Zn(2+) contacts are provided by His562, His566, Cys665, and His669.

This sequence belongs to the class-II aminoacyl-tRNA synthetase family. Zn(2+) serves as cofactor.

Its subcellular location is the cytoplasm. It catalyses the reaction tRNA(Ala) + L-alanine + ATP = L-alanyl-tRNA(Ala) + AMP + diphosphate. Catalyzes the attachment of alanine to tRNA(Ala) in a two-step reaction: alanine is first activated by ATP to form Ala-AMP and then transferred to the acceptor end of tRNA(Ala). Also edits incorrectly charged Ser-tRNA(Ala) and Gly-tRNA(Ala) via its editing domain. This Pseudomonas syringae pv. tomato (strain ATCC BAA-871 / DC3000) protein is Alanine--tRNA ligase.